Consider the following 607-residue polypeptide: Albumin B (607 aa).

Positions 1–18 (MKWITLICLLISSSFIES) are cleaved as a signal peptide. A propeptide spanning residues 19 to 24 (RILFKR) is cleaved from the precursor. Albumin domains follow at residues 22-209 (FKRD…KQLM), 210-402 (KQSH…RFMN), and 403-600 (EAKE…VLIE). Residue histidine 30 coordinates Cu cation. Cystine bridges form between cysteine 80/cysteine 88, cysteine 101/cysteine 117, cysteine 116/cysteine 127, cysteine 147/cysteine 192, cysteine 191/cysteine 200, cysteine 223/cysteine 269, cysteine 268/cysteine 276, cysteine 288/cysteine 302, cysteine 301/cysteine 312, cysteine 339/cysteine 384, cysteine 383/cysteine 392, cysteine 415/cysteine 461, cysteine 460/cysteine 471, cysteine 484/cysteine 500, cysteine 499/cysteine 510, cysteine 537/cysteine 582, and cysteine 581/cysteine 590.

This sequence belongs to the ALB/AFP/VDB family. As to expression, plasma.

The protein resides in the secreted. In terms of biological role, serum albumin, the main protein of plasma, has a good binding capacity for water, Ca(2+), Na(+), K(+), fatty acids, hormones, bilirubin and drugs. Its main function is the regulation of the colloidal osmotic pressure of blood. The polypeptide is Albumin B (alb-b) (Xenopus laevis (African clawed frog)).